The following is a 198-amino-acid chain: Na(+)-translocating NADH-quinone reductase subunit E (198 aa).

6 helical membrane-spanning segments follow: residues 11–31 (SIFIENLALSFFLGMCTFLAV), 39–59 (MGLGIAVIVVQTVAVPANNLI), 77–97 (FLSFITFIGVIAALVQILEMA), 110–130 (GIFLPLITVNCAIFGGVSFMV), 140–160 (VVYGVGSGAGWMLAIVAMAGI), and 176–196 (LGITFITAGLMALGFMSFSGI).

The protein belongs to the NqrDE/RnfAE family. In terms of assembly, composed of six subunits; NqrA, NqrB, NqrC, NqrD, NqrE and NqrF.

Its subcellular location is the cell inner membrane. It carries out the reaction a ubiquinone + n Na(+)(in) + NADH + H(+) = a ubiquinol + n Na(+)(out) + NAD(+). NQR complex catalyzes the reduction of ubiquinone-1 to ubiquinol by two successive reactions, coupled with the transport of Na(+) ions from the cytoplasm to the periplasm. NqrA to NqrE are probably involved in the second step, the conversion of ubisemiquinone to ubiquinol. This Aeromonas salmonicida (strain A449) protein is Na(+)-translocating NADH-quinone reductase subunit E.